The following is a 222-amino-acid chain: 7-carboxy-7-deazaguanine synthase (222 aa).

Substrate is bound by residues 16 to 18 and arginine 31; that span reads LQG. Positions 22 to 222 constitute a Radical SAM core domain; that stretch reads NLGRPAVFVR…IMAWGNARGK (201 aa). The [4Fe-4S] cluster site is built by cysteine 35, cysteine 39, and cysteine 42. Threonine 44 serves as a coordination point for Mg(2+). Threonine 77 is a binding site for substrate. S-adenosyl-L-methionine contacts are provided by residues glycine 79 and 126-128; that span reads SPK.

It belongs to the radical SAM superfamily. 7-carboxy-7-deazaguanine synthase family. Homodimer. [4Fe-4S] cluster is required as a cofactor. The cofactor is S-adenosyl-L-methionine. Requires Mg(2+) as cofactor.

The catalysed reaction is 6-carboxy-5,6,7,8-tetrahydropterin + H(+) = 7-carboxy-7-deazaguanine + NH4(+). It participates in purine metabolism; 7-cyano-7-deazaguanine biosynthesis. Its function is as follows. Catalyzes the complex heterocyclic radical-mediated conversion of 6-carboxy-5,6,7,8-tetrahydropterin (CPH4) to 7-carboxy-7-deazaguanine (CDG), a step common to the biosynthetic pathways of all 7-deazapurine-containing compounds. The sequence is that of 7-carboxy-7-deazaguanine synthase from Pyrobaculum aerophilum (strain ATCC 51768 / DSM 7523 / JCM 9630 / CIP 104966 / NBRC 100827 / IM2).